The following is a 504-amino-acid chain: Immunoglobulin-binding protein EibC (504 aa).

An N-terminal signal peptide occupies residues 1-26 (MSKKFTMTLLSSSLAGLLVMSGGVSA). The interval 27-413 (QEEKYTVPYA…IAANTRTLQQ (387 aa)) is surface exposed passenger domain. Over 27-453 (QEEKYTVPYA…GLFQPYSVGK (427 aa)) the chain is Extracellular. The head domain stretch occupies residues 154-280 (DAKASGEFSV…TGTESDKTYG (127 aa)). The neck stretch occupies residues 281–296 (TRVLGGLSDGTRNSDA). Residues 297-342 (ATVGQLNRKVGGVYDDVKARITVESEKQKKYTDQKTSEVNEKVEAR) are right-handed coiled-coil (RHcc). Residues 343–368 (TTVGVDSDGKLTRAEGATKTIAVNDG) form a saddle domain region. The segment at 369–434 (LVALSGRTDR…INENHKEMKR (66 aa)) is left-handed coiled-coil (LHcc). Residues 411-438 (LQQHSARLDSQQRQINENHKEMKRAAAQ) are a coiled coil. An outer membrane translocation of the passenger domain region spans residues 411–453 (LQQHSARLDSQQRQINENHKEMKRAAAQSAALTGLFQPYSVGK). A run of 4 beta stranded transmembrane segments spans residues 454–464 (FNATAAVGGYS), 467–478 (QALAVGVGYRFN), 481–490 (TAAKAGVAFS), and 494–504 (ASWNVGVNFEF). A translocator domain region spans residues 454-504 (FNATAAVGGYSDQQALAVGVGYRFNEQTAAKAGVAFSDGDASWNVGVNFEF).

The protein belongs to the autotransporter-2 (AT-2) (TC 1.B.40) family. Eib subfamily. In terms of assembly, homotrimer; can probably form mixed heterotrimers in vivo. Will form mixed heterotrimers with EibD; these are correctly located in the outer membrane and bind IgG Fc, although less well than homotrimers. In denaturing gels runs as a band of about 200 kDa. Binds the Fc portion of immunoglobulins; binds more than 1 Fc per subunit.

It localises to the cell surface. The protein resides in the cell outer membrane. In terms of biological role, binds (in a non-immune fashion) to the Fc portion of human IgG and less well to IgA; binding occurs on the cell surface. Confers the ability to survive exposure to human serum exposure. Binds to the Fc portion of human IgG and IgA and to whole mouse antibodies also via Fc. This is Immunoglobulin-binding protein EibC from Escherichia coli.